Consider the following 690-residue polypeptide: Iron-sulfur clusters transporter ATM1, mitochondrial (690 aa).

A mitochondrion-targeting transit peptide spans 1 to 26 (MLLLPRCPVIGRIVRSKFRSGLIRNH). Residues 27-110 (SPVIFTVSKL…PKGNNKVRIR (84 aa)) lie on the Mitochondrial matrix side of the membrane. A helical transmembrane segment spans residues 111-132 (VLIALGLLISAKILNVQVPFFF). Residues 111 to 401 (VLIALGLLIS…LGSVYRDLKQ (291 aa)) form the ABC transmembrane type-1 domain. Residues 133-155 (KQTIDSMNIAWDDPTVALPAAIG) lie on the Mitochondrial intermembrane side of the membrane. Residues 156 to 179 (LTILCYGVARFGSVLFGELRNAVF) traverse the membrane as a helical segment. The Mitochondrial matrix portion of the chain corresponds to 180 to 228 (AKVAQNAIRTVSLQTFQHLMKLDLGWHLSRQTGGLTRAMDRGTKGISQV). The chain crosses the membrane as a helical span at residues 229-252 (LTAMVFHIIPISFEISVVCGILTY). A topological domain (mitochondrial intermembrane) is located at residue glutamine 253. The chain crosses the membrane as a helical span at residues 254–274 (FGASFAAITFSTMLLYSIFTI). Over 275-340 (KTTAWRTHFR…SQIKVSQSLA (66 aa)) the chain is Mitochondrial matrix. Glutathione contacts are provided by residues 280-284 (RTHFR) and 343-346 (NSGQ). A helical transmembrane segment spans residues 341–359 (FLNSGQNLIFTTALTAMMY). Residues 360–374 (MGCTGVIGGNLTVGD) lie on the Mitochondrial intermembrane side of the membrane. The helical transmembrane segment at 375–396 (LVLINQLVFQLSVPLNFLGSVY) threads the bilayer. Glycine 393 serves as a coordination point for glutathione. The Mitochondrial matrix segment spans residues 397-690 (RDLKQSLIDM…ENELKDQQEL (294 aa)). Positions 436 to 672 (ITFENVTFGY…PGSLYRELWT (237 aa)) constitute an ABC transporter domain. Residues tyrosine 445 and 469-480 (GSSGSGKSTILK) contribute to the ATP site.

This sequence belongs to the ABC transporter superfamily. ABCB family. Heavy Metal importer (TC 3.A.1.210) subfamily. In terms of assembly, homodimer.

The protein localises to the mitochondrion inner membrane. Its function is as follows. Performs an essential function in the generation of cytoplasmic iron-sulfur proteins by mediating the ATP-dependent export of Fe/S cluster precursors synthesized by NFS1 and other mitochondrial proteins. Hydrolyzes ATP. Binds glutathione and may function by transporting a glutathione-conjugated iron-sulfur compound. The sequence is that of Iron-sulfur clusters transporter ATM1, mitochondrial from Saccharomyces cerevisiae (strain ATCC 204508 / S288c) (Baker's yeast).